The primary structure comprises 219 residues: Cytidylate kinase (219 aa).

Residue 10-18 (GPAAAGKST) participates in ATP binding.

It belongs to the cytidylate kinase family. Type 1 subfamily.

It is found in the cytoplasm. The catalysed reaction is CMP + ATP = CDP + ADP. It catalyses the reaction dCMP + ATP = dCDP + ADP. This Staphylococcus saprophyticus subsp. saprophyticus (strain ATCC 15305 / DSM 20229 / NCIMB 8711 / NCTC 7292 / S-41) protein is Cytidylate kinase.